We begin with the raw amino-acid sequence, 222 residues long: NAD(P)H-hydrate epimerase (222 aa).

The region spanning 9–209 (MQQIDSYTIE…DIGLRLPEDF (201 aa)) is the YjeF N-terminal domain. A (6S)-NADPHX-binding site is contributed by 57-61 (NNGAD). Residues N58 and D119 each contribute to the K(+) site. Residues 123–129 (GVGLNNT) and D152 each bind (6S)-NADPHX. K(+) is bound at residue T155.

This sequence belongs to the NnrE/AIBP family. The cofactor is K(+).

The catalysed reaction is (6R)-NADHX = (6S)-NADHX. It carries out the reaction (6R)-NADPHX = (6S)-NADPHX. Its function is as follows. Catalyzes the epimerization of the S- and R-forms of NAD(P)HX, a damaged form of NAD(P)H that is a result of enzymatic or heat-dependent hydration. This is a prerequisite for the S-specific NAD(P)H-hydrate dehydratase to allow the repair of both epimers of NAD(P)HX. This is NAD(P)H-hydrate epimerase from Leuconostoc citreum (strain KM20).